A 322-amino-acid polypeptide reads, in one-letter code: Mitochondrial glutamate carrier 1 (322 aa).

3 Solcar repeats span residues 6 to 93 (ISLP…FRYQ), 101 to 214 (LTLF…LNEL), and 223 to 312 (SPFY…GIAE). The next 6 membrane-spanning stretches (helical) occupy residues 12–32 (LING…IDLA), 62–82 (YFGM…EKAI), 107–127 (MLAG…MEML), 189–209 (GLGA…PLFA), 223–243 (SPFY…AVAV), and 292–312 (ALVI…GIAE).

This sequence belongs to the mitochondrial carrier (TC 2.A.29) family.

Its subcellular location is the mitochondrion inner membrane. The enzyme catalyses L-glutamate(in) + H(+)(in) = L-glutamate(out) + H(+)(out). Its function is as follows. Mitochondrial glutamate/H(+) symporter. Responsible for the transport of glutamate from the cytosol into the mitochondrial matrix with the concomitant import of a proton. Plays a role in the control of glucose-stimulated insulin secretion. In Bos taurus (Bovine), this protein is Mitochondrial glutamate carrier 1 (SLC25A22).